The sequence spans 70 residues: MLEDKKAAAKVEPLRKTRPCPECGKPSNREHYPFCSNRCREVDLSRWLTGSYAIPVADDETKADYPDEEN.

Residues Cys-20, Cys-23, Cys-35, and Cys-39 each contribute to the Zn(2+) site.

Belongs to the DNA gyrase inhibitor YacG family. Interacts with GyrB. Zn(2+) serves as cofactor.

Its function is as follows. Inhibits all the catalytic activities of DNA gyrase by preventing its interaction with DNA. Acts by binding directly to the C-terminal domain of GyrB, which probably disrupts DNA binding by the gyrase. The polypeptide is DNA gyrase inhibitor YacG (Rhizobium etli (strain ATCC 51251 / DSM 11541 / JCM 21823 / NBRC 15573 / CFN 42)).